The following is a 76-amino-acid chain: Senegalin (76 aa).

A signal peptide spans 1–22 (MLSLKKSMLLLFFLGMVSFSLA). The propeptide occupies 23–55 (NKRSDGKRADEEGEDKRADEEGEDKRADEEGED). A disordered region spans residues 24–54 (KRSDGKRADEEGEDKRADEEGEDKRADEEGE). Leucine amide is present on L75.

In terms of tissue distribution, expressed by the skin glands.

The protein localises to the secreted. In terms of biological role, antimicrobial peptide with activity against the Gram-positive bacterium S.aureus NCTC 10788 (MIC=50 um) and the yeast C.albicans NCPF 1467 (MIC=150 uM). Ineffective against the Gram-negative bacterium E.coli NCTC 10418. Induces a dose-dependent contraction of rat urinary bladder smooth muscle (EC50=2.9 nM) and a dose-dependent relaxation of rat tail artery smooth muscle (EC50=37.7 nM). In Kassina senegalensis (Senegal running frog), this protein is Senegalin.